The primary structure comprises 188 residues: Elongation factor P (188 aa).

Belongs to the elongation factor P family.

The protein resides in the cytoplasm. It participates in protein biosynthesis; polypeptide chain elongation. Involved in peptide bond synthesis. Stimulates efficient translation and peptide-bond synthesis on native or reconstituted 70S ribosomes in vitro. Probably functions indirectly by altering the affinity of the ribosome for aminoacyl-tRNA, thus increasing their reactivity as acceptors for peptidyl transferase. The chain is Elongation factor P from Methylobacterium sp. (strain 4-46).